Reading from the N-terminus, the 145-residue chain is LIRP (145 aa).

The or 22 signal peptide spans 1-19; sequence MWKLCLRLLAVLAVCLSTA. 2 propeptides span residues 20 to 33 and 117 to 122; these read TQAQSDLFLLSPKR and FRRRTR. Cystine bridges form between Cys-44–Cys-129, Cys-56–Cys-142, and Cys-128–Cys-133.

The protein belongs to the insulin family. Heterodimer of a B chain and an A chain linked by two disulfide bonds.

The protein localises to the secreted. The sequence is that of LIRP from Locusta migratoria (Migratory locust).